A 176-amino-acid chain; its full sequence is Sperm-egg fusion protein TMEM95 (176 aa).

An N-terminal signal peptide occupies residues Met1–Ala16. 4 disulfides stabilise this stretch: Cys17-Cys119, Cys20-Cys122, Cys106-Cys129, and Cys110-Cys135. Topologically, residues Cys17–Arg146 are extracellular. N-linked (GlcNAc...) asparagine glycosylation is found at Asn36 and Asn118. The helical transmembrane segment at Ile147–Glu167 threads the bilayer. At Tyr168–Leu176 the chain is on the cytoplasmic side.

The protein belongs to the TMEM95 family. Does not interact with sperm-egg fusion proteins IZUMO1 or IZUMO1R/JUNO. Post-translationally, N-glycosylated. Expressed exclusively in testis.

It localises to the cytoplasmic vesicle. The protein localises to the secretory vesicle. Its subcellular location is the acrosome membrane. Functionally, sperm protein required for fusion of sperm with the egg membrane during fertilization. The protein is Sperm-egg fusion protein TMEM95 of Mus musculus (Mouse).